A 146-amino-acid chain; its full sequence is Hemoglobin subunit beta (146 aa).

N-acetylvaline is present on Val1. One can recognise a Globin domain in the interval 2-146; the sequence is HLTAEEKSAV…VATALAHKYH (145 aa). Residue Thr12 is modified to Phosphothreonine. At Ser44 the chain carries Phosphoserine. Position 59 is an N6-acetyllysine (Lys59). Residue His63 coordinates heme b. N6-acetyllysine is present on Lys82. His92 contacts heme b. At Cys93 the chain carries S-nitrosocysteine. Lys144 is subject to N6-acetyllysine.

This sequence belongs to the globin family. Heterotetramer of two alpha chains and two beta chains. As to expression, red blood cells.

Its function is as follows. Involved in oxygen transport from the lung to the various peripheral tissues. The protein is Hemoglobin subunit beta (HBB) of Cebus albifrons (White-fronted capuchin).